The following is a 479-amino-acid chain: Ribosomal RNA small subunit methyltransferase F (479 aa).

Residues 125-131 (AAAPGSK), Glu149, Asp176, and Asp194 each bind S-adenosyl-L-methionine. Cys247 acts as the Nucleophile in catalysis.

It belongs to the class I-like SAM-binding methyltransferase superfamily. RsmB/NOP family.

Its subcellular location is the cytoplasm. The enzyme catalyses cytidine(1407) in 16S rRNA + S-adenosyl-L-methionine = 5-methylcytidine(1407) in 16S rRNA + S-adenosyl-L-homocysteine + H(+). Specifically methylates the cytosine at position 1407 (m5C1407) of 16S rRNA. The polypeptide is Ribosomal RNA small subunit methyltransferase F (Escherichia coli O17:K52:H18 (strain UMN026 / ExPEC)).